A 388-amino-acid chain; its full sequence is Galactokinase (388 aa).

33–36 (EHTD) is a substrate binding site. ATP-binding positions include Ser67 and 124–130 (GAGLSSS). Mg(2+) is bound by residues Ser130 and Glu162. The active-site Proton acceptor is the Asp174. Tyr224 serves as a coordination point for substrate.

Belongs to the GHMP kinase family. GalK subfamily.

It is found in the cytoplasm. The catalysed reaction is alpha-D-galactose + ATP = alpha-D-galactose 1-phosphate + ADP + H(+). It functions in the pathway carbohydrate metabolism; galactose metabolism. In terms of biological role, catalyzes the transfer of the gamma-phosphate of ATP to D-galactose to form alpha-D-galactose-1-phosphate (Gal-1-P). This is Galactokinase from Lacticaseibacillus paracasei (strain ATCC 334 / BCRC 17002 / CCUG 31169 / CIP 107868 / KCTC 3260 / NRRL B-441) (Lactobacillus paracasei).